A 387-amino-acid chain; its full sequence is Chaperone protein DnaJ (387 aa).

One can recognise a J domain in the interval 5–70 (DYYEVLGLQK…DKKAKYDQFG (66 aa)). Residues 144–226 (GCEKEISITR…CKGKGTVRKN (83 aa)) form a CR-type zinc finger. Zn(2+) is bound by residues cysteine 157, cysteine 160, cysteine 174, cysteine 177, cysteine 200, cysteine 203, cysteine 214, and cysteine 217. 4 CXXCXGXG motif repeats span residues 157–164 (CETCHGTG), 174–181 (CPKCNGSG), 200–207 (CDQCGGTG), and 214–221 (CPDCKGKG).

It belongs to the DnaJ family. As to quaternary structure, homodimer. Requires Zn(2+) as cofactor.

It localises to the cytoplasm. In terms of biological role, participates actively in the response to hyperosmotic and heat shock by preventing the aggregation of stress-denatured proteins and by disaggregating proteins, also in an autonomous, DnaK-independent fashion. Unfolded proteins bind initially to DnaJ; upon interaction with the DnaJ-bound protein, DnaK hydrolyzes its bound ATP, resulting in the formation of a stable complex. GrpE releases ADP from DnaK; ATP binding to DnaK triggers the release of the substrate protein, thus completing the reaction cycle. Several rounds of ATP-dependent interactions between DnaJ, DnaK and GrpE are required for fully efficient folding. Also involved, together with DnaK and GrpE, in the DNA replication of plasmids through activation of initiation proteins. This is Chaperone protein DnaJ from Clostridium perfringens (strain 13 / Type A).